The following is a 165-amino-acid chain: Large ribosomal subunit protein uL11 (165 aa).

Position 38 is a phosphoserine (serine 38). Residue lysine 40 forms a Glycyl lysine isopeptide (Lys-Gly) (interchain with G-Cter in SUMO2) linkage. Residue lysine 48 forms a Glycyl lysine isopeptide (Lys-Gly) (interchain with G-Cter in ubiquitin) linkage. Lysine 54 is subject to N6-acetyllysine. Lysine 83 is covalently cross-linked (Glycyl lysine isopeptide (Lys-Gly) (interchain with G-Cter in ubiquitin)). Serine 165 is modified (phosphoserine).

It belongs to the universal ribosomal protein uL11 family. As to quaternary structure, component of the large ribosomal subunit. Mature ribosomes consist of a small (40S) and a large (60S) subunit. The 40S subunit contains about 33 different proteins and 1 molecule of RNA (18S). The 60S subunit contains about 49 different proteins and 3 molecules of RNA (28S, 5.8S and 5S). Ubiquitinated at Lys-48 and Lys-83 by RNF14 and RNF25 in response to ribosome collisions (ribosome stalling).

The protein resides in the cytoplasm. In terms of biological role, component of the large ribosomal subunit. The ribosome is a large ribonucleoprotein complex responsible for the synthesis of proteins in the cell. Binds directly to 26S ribosomal RNA. The protein is Large ribosomal subunit protein uL11 (RPL12) of Chinchilla lanigera (Long-tailed chinchilla).